A 104-amino-acid polypeptide reads, in one-letter code: MSQFENVTVVKAANVYYDGKVSSRTVLFADGSKKTLGLLLPGEYEFGTEAAEIMEMLAGDVDVLLPGETKWQSLSAGESFNVPANSKFGINVKTVADYCCSYID.

This sequence belongs to the nucleoside phosphorylase PpnP family.

It catalyses the reaction a purine D-ribonucleoside + phosphate = a purine nucleobase + alpha-D-ribose 1-phosphate. The enzyme catalyses adenosine + phosphate = alpha-D-ribose 1-phosphate + adenine. The catalysed reaction is cytidine + phosphate = cytosine + alpha-D-ribose 1-phosphate. It carries out the reaction guanosine + phosphate = alpha-D-ribose 1-phosphate + guanine. It catalyses the reaction inosine + phosphate = alpha-D-ribose 1-phosphate + hypoxanthine. The enzyme catalyses thymidine + phosphate = 2-deoxy-alpha-D-ribose 1-phosphate + thymine. The catalysed reaction is uridine + phosphate = alpha-D-ribose 1-phosphate + uracil. It carries out the reaction xanthosine + phosphate = alpha-D-ribose 1-phosphate + xanthine. Catalyzes the phosphorolysis of diverse nucleosides, yielding D-ribose 1-phosphate and the respective free bases. Can use uridine, adenosine, guanosine, cytidine, thymidine, inosine and xanthosine as substrates. Also catalyzes the reverse reactions. The protein is Pyrimidine/purine nucleoside phosphorylase of Hydrogenovibrio crunogenus (strain DSM 25203 / XCL-2) (Thiomicrospira crunogena).